The following is a 344-amino-acid chain: Heme A synthase (344 aa).

9 helical membrane passes run 20–40 (IAWW…VGGL), 104–124 (RFLG…FVVT), 135–155 (LIFL…MVMS), 170–190 (AHLG…LDLL), 205–225 (AAAI…VAGI), 233–253 (TWPL…TPVW), 265–285 (FQHR…WWAA), 296–316 (WLAV…LWVV), and 317–337 (PIPL…VAVW). Histidine 267 lines the heme pocket. Histidine 324 contacts heme.

This sequence belongs to the COX15/CtaA family. Type 2 subfamily. Interacts with CtaB. Heme b is required as a cofactor.

It localises to the cell membrane. The enzyme catalyses Fe(II)-heme o + 2 A + H2O = Fe(II)-heme a + 2 AH2. Its pathway is porphyrin-containing compound metabolism; heme A biosynthesis; heme A from heme O: step 1/1. In terms of biological role, catalyzes the conversion of heme O to heme A by two successive hydroxylations of the methyl group at C8. The first hydroxylation forms heme I, the second hydroxylation results in an unstable dihydroxymethyl group, which spontaneously dehydrates, resulting in the formyl group of heme A. The polypeptide is Heme A synthase (Parvibaculum lavamentivorans (strain DS-1 / DSM 13023 / NCIMB 13966)).